The sequence spans 286 residues: Lipid phosphate phosphatase epsilon 2, chloroplastic (286 aa).

The N-terminal 60 residues, Met1–Met60, are a transit peptide targeting the chloroplast. The next 5 helical transmembrane spans lie at Leu133–Leu149, Ala173–Thr193, Asn194–Leu214, Val226–Ser246, and Ile260–Asn280.

The protein belongs to the PA-phosphatase related phosphoesterase family. Expressed in root tips, root branch points, cotyledons and leaves.

The protein resides in the plastid. It localises to the chloroplast inner membrane. With respect to regulation, inhibited by Mg(2+). Exhibits phosphatidate phosphatase (PAP) activity in vitro. May play a secondary role as PAP in plastids. The protein is Lipid phosphate phosphatase epsilon 2, chloroplastic (LPPE2) of Arabidopsis thaliana (Mouse-ear cress).